Reading from the N-terminus, the 705-residue chain is MAKNDLHLTRNIGIMAHIDAGKTTTSERILFYTGLTHKIGEVHDGAATMDWMEQEQERGITITSAATTTRWKYAGDTYKINLIDTPGHVDFTAEVERSLRILDGAVAAYCAVGGVEPQSETVWRQADKYNVPRIAYVNKMDRSGADFFEVVRQMKAVLGANPCPVVIPIGAEENFKGLVDLIKMKAIYWHDETMGADYTIEEIPANLVDEANEWRDKMLEKVAEFDDALMEKYFDDPSTITEEEVLRALRNATVQMAVVPMLCGSSFKNKGVQTLLDYVCAFLPSPLDAENVVGTNPDTGAEEDRKPSEDDKTSALAFKIATDPYVGRLTFFRVYSGKIEAGSYIYNSRSGKKERVSRLFQMHSNKQNPVEVIGAGDIGAGVGFKDIHTGDTLCDETAPIVLESMDFPEPVIGIAVEPKTQKDMDKLSNGLAKLAEEDPTFTVKTDEQTGQTVISGMGELHLDIIIDRLKREFKVECNQGKPQVNYKEAITKTVNLREVYKKQSGGRGKFADIIVNIGPVDEDFTQGGLQFVDEVKGGNIPKEFIPSVQKGFQTAMKNGVLAGYPLDSLKVTLVDGSFHPVDSDQLSFEICAIQAYKNACAKAGPVLMEPIMKLEVVTPEENMGDVIGDLNKRRGQVEGMESSRSGARIVKAMVPLAEMFGYVTALRTITSGRATSSMVYSHHAQVSSSIAKAVLEEVKGRADLL.

One can recognise a tr-type G domain in the interval 7–287 (HLTRNIGIMA…YVCAFLPSPL (281 aa)). GTP contacts are provided by residues 16–23 (AHIDAGKT), 84–88 (DTPGH), and 138–141 (NKMD). The interval 291–312 (NVVGTNPDTGAEEDRKPSEDDK) is disordered. Residues 302–312 (EEDRKPSEDDK) are compositionally biased toward basic and acidic residues.

This sequence belongs to the TRAFAC class translation factor GTPase superfamily. Classic translation factor GTPase family. EF-G/EF-2 subfamily.

Its subcellular location is the cytoplasm. Its function is as follows. Catalyzes the GTP-dependent ribosomal translocation step during translation elongation. During this step, the ribosome changes from the pre-translocational (PRE) to the post-translocational (POST) state as the newly formed A-site-bound peptidyl-tRNA and P-site-bound deacylated tRNA move to the P and E sites, respectively. Catalyzes the coordinated movement of the two tRNA molecules, the mRNA and conformational changes in the ribosome. In Bacteroides fragilis (strain ATCC 25285 / DSM 2151 / CCUG 4856 / JCM 11019 / LMG 10263 / NCTC 9343 / Onslow / VPI 2553 / EN-2), this protein is Elongation factor G.